A 142-amino-acid chain; its full sequence is Large ribosomal subunit protein uL13 (142 aa).

The protein belongs to the universal ribosomal protein uL13 family. In terms of assembly, part of the 50S ribosomal subunit.

This protein is one of the early assembly proteins of the 50S ribosomal subunit, although it is not seen to bind rRNA by itself. It is important during the early stages of 50S assembly. The chain is Large ribosomal subunit protein uL13 from Cronobacter sakazakii (strain ATCC BAA-894) (Enterobacter sakazakii).